We begin with the raw amino-acid sequence, 582 residues long: Vesicular glutamate transporter 2 (582 aa).

Over 1–71 the chain is Cytoplasmic; the sequence is MESVKQRILT…CTCFGLPRRY (71 aa). The helical transmembrane segment at 72–92 threads the bilayer; that stretch reads IIAIMSGLGFCISFGIRCNLG. Over 93 to 125 the chain is Vesicular; sequence VAIVDMVNNSTIHRGGKVIKEKAKFNWDPETVG. Asn-100 and Asn-101 each carry an N-linked (GlcNAc...) asparagine glycan. The chain crosses the membrane as a helical span at residues 126–146; it reads MIHGSFFWGYIITQIPGGYIA. Topologically, residues 147–148 are cytoplasmic; the sequence is SR. A helical transmembrane segment spans residues 149–169; the sequence is LAANRVFGAAILLTSTLNMLI. Over 170 to 177 the chain is Vesicular; that stretch reads PSAARVHY. A helical transmembrane segment spans residues 178 to 198; the sequence is GCVIFVRILQGLVEGVTYPAC. The Cytoplasmic portion of the chain corresponds to 199-216; that stretch reads HGIWSKWAPPLERSRLAT. Residues 217-237 traverse the membrane as a helical segment; sequence TSFCGSYAGAVIAMPLAGILV. At 238–244 the chain is on the vesicular side; sequence QYTGWSS. The chain crosses the membrane as a helical span at residues 245–265; that stretch reads VFYVYGSFGMIWYMFWLLVSY. Residues 266–310 are Cytoplasmic-facing; it reads ESPAKHPTITDEERRYIEESIGESANLLGAMEKFKTPWRKFFTSM. A helical transmembrane segment spans residues 311–331; that stretch reads PVYAIIVANFCRSWTFYLLLI. Residues 332–349 are Vesicular-facing; that stretch reads SQPAYFEEVFGFEISKVG. A helical transmembrane segment spans residues 350-370; sequence MLSAVPHLVMTIIVPIGGQIA. Residues 371–386 are Cytoplasmic-facing; that stretch reads DFLRSKQILSTTTVRK. The chain crosses the membrane as a helical span at residues 387–407; it reads IMNCGGFGMEATLLLVVGYSH. Residues 408 to 409 lie on the Vesicular side of the membrane; that stretch reads TR. The helical transmembrane segment at 410–430 threads the bilayer; sequence GVAISFLVLAVGFSGFAISGF. Over 431–443 the chain is Cytoplasmic; the sequence is NVNHLDIAPRYAS. Residues 444 to 464 form a helical membrane-spanning segment; the sequence is ILMGISNGVGTLSGMVCPIIV. Topologically, residues 465 to 477 are vesicular; it reads GAMTKNKSREEWQ. The N-linked (GlcNAc...) asparagine glycan is linked to Asn-470. Residues 478-498 form a helical membrane-spanning segment; the sequence is YVFLIAALVHYGGVIFYAIFA. At 499-582 the chain is on the cytoplasmic side; the sequence is SGEKQPWADP…YNYKDRDDYS (84 aa).

Belongs to the major facilitator superfamily. Sodium/anion cotransporter family. VGLUT subfamily.

The protein resides in the cytoplasmic vesicle. It localises to the secretory vesicle. It is found in the synaptic vesicle membrane. The protein localises to the synapse. Its subcellular location is the synaptosome. The protein resides in the cell membrane. It carries out the reaction L-glutamate(out) = L-glutamate(in). The catalysed reaction is 3 Na(+)(out) + phosphate(out) = 3 Na(+)(in) + phosphate(in). It catalyses the reaction phosphate(in) = phosphate(out). The enzyme catalyses K(+)(in) + H(+)(out) = K(+)(out) + H(+)(in). It carries out the reaction chloride(in) = chloride(out). Its activity is regulated as follows. Chloride channel activity is allosterically activated by lumenal H(+) and Cl(-) leading to synaptic vesicles acidification. The L-glutamate transport activity is allosterically activated by lumenal H(+) and Cl(-). The allosteric requirement for H(+) efficiently prevents non-vesicular efflux across the plasma membrane. The L-glutamate uniporter activity exhibits a biphasic dependence on chloride concentration. In terms of biological role, multifunctional transporter that transports L-glutamate as well as multiple ions such as chloride, proton, potassium, sodium and phosphate. At the synaptic vesicle membrane, mainly functions as a uniporter which transports preferentially L-glutamate but also, phosphate from the cytoplasm into synaptic vesicles at presynaptic nerve terminals of excitatory neural cells. The L-glutamate or phosphate uniporter activity is electrogenic and is driven by the proton electrochemical gradient, mainly by the electrical gradient established by the vacuolar H(+)-ATPase across the synaptic vesicle membrane. In addition, functions as a chloride channel that allows a chloride permeation through the synaptic vesicle membrane therefore affects the proton electrochemical gradient and promotes synaptic vesicles acidification. Moreover, functions as a vesicular K(+)/H(+) antiport allowing to maintain the electrical gradient and to decrease chemical gradient and therefore sustain vesicular L-glutamate uptake. The vesicular H(+)/H(+) antiport activity is electroneutral. At the plasma membrane, following exocytosis, functions as a symporter of Na(+) and phosphate from the extracellular space to the cytoplasm allowing synaptic phosphate homeostasis regulation. The symporter activity is driven by an inside negative membrane potential and is electrogenic. Also involved in the regulation of retinal hyaloid vessel regression during postnatal development. May also play a role in the endocrine L-glutamatergic system of other tissues such as pineal gland and pancreas. The protein is Vesicular glutamate transporter 2 of Bos taurus (Bovine).